Consider the following 304-residue polypeptide: Dihydroorotate dehydrogenase B (NAD(+)), catalytic subunit (304 aa).

FMN is bound by residues S21 and 45 to 46 (KA). Substrate is bound by residues K45 and 69–73 (NAIGL). Residues N99 and N127 each contribute to the FMN site. N127 lines the substrate pocket. The active-site Nucleophile is the C130. K165 and I191 together coordinate FMN. Residue 192-193 (NT) coordinates substrate. Residues G217, 243 to 244 (GG), and 265 to 266 (GT) contribute to the FMN site.

This sequence belongs to the dihydroorotate dehydrogenase family. Type 1 subfamily. As to quaternary structure, heterotetramer of 2 PyrK and 2 PyrD type B subunits. FMN serves as cofactor.

The protein resides in the cytoplasm. The enzyme catalyses (S)-dihydroorotate + NAD(+) = orotate + NADH + H(+). The protein operates within pyrimidine metabolism; UMP biosynthesis via de novo pathway; orotate from (S)-dihydroorotate (NAD(+) route): step 1/1. Functionally, catalyzes the conversion of dihydroorotate to orotate with NAD(+) as electron acceptor. The protein is Dihydroorotate dehydrogenase B (NAD(+)), catalytic subunit (pyrD) of Listeria monocytogenes serotype 4b (strain CLIP80459).